The chain runs to 379 residues: Cytochrome b (379 aa).

The next 4 helical transmembrane spans lie at 34-54, 78-99, 114-134, and 179-199; these read LGSLLGMCLMIQIVTGLFLTM, WLIRTLHANGASMFFICMYLHV, WMTGTIILFLVMATAFMGYVL, and FYTFHFVLPFIVMAMVMIHLF. Heme b is bound by residues His84 and His98. Residues His183 and His197 each coordinate heme b. His202 serves as a coordination point for a ubiquinone. Helical transmembrane passes span 227–247, 289–309, 321–341, and 348–368; these read YKDMITFIILMMILIMLCLID, LGGVIALVMSISILMIMPFYN, MNQIMFWIMVIVICLLTWIGK, and YIMTGQILTIIYFSYFLFNVH.

The protein belongs to the cytochrome b family. The main subunits of complex b-c1 are: cytochrome b, cytochrome c1 and the Rieske protein. It depends on heme b as a cofactor.

It is found in the mitochondrion inner membrane. Functionally, component of the ubiquinol-cytochrome c reductase complex (complex III or cytochrome b-c1 complex) that is part of the mitochondrial respiratory chain. The b-c1 complex mediates electron transfer from ubiquinol to cytochrome c. Contributes to the generation of a proton gradient across the mitochondrial membrane that is then used for ATP synthesis. This Locusta migratoria (Migratory locust) protein is Cytochrome b (MT-CYB).